Here is a 108-residue protein sequence, read N- to C-terminus: Ig kappa chain V-VI region NQ2-6.1 (108 aa).

Residues 1–23 (QILLTQSPAIMSASPGQKVTMTC) form a framework-1 region. A disulfide bridge connects residues Cys23 and Cys87. Residues 24–33 (SASSSVSYMY) are complementarity-determining-1. The interval 34–48 (WYQQKPGSSPRLLIY) is framework-2. Residues 49–55 (DTSNLAS) are complementarity-determining-2. Residues 56 to 87 (GVPVRFSGSGSATSYSLTITRMQAEDAATYYC) form a framework-3 region. The segment at 88-98 (QQWSSYPPMLT) is complementarity-determining-3. Residues 99 to 108 (FGAGTKLELK) are framework-4.

The protein is Ig kappa chain V-VI region NQ2-6.1 of Mus musculus (Mouse).